The following is an 804-amino-acid chain: Lon protease 2 (804 aa).

The Lon N-terminal domain occupies 6 to 199; it reads MPVCPVRGSV…AVLVLLEAEL (194 aa). 362–369 contacts ATP; the sequence is GPPGVGKT. The region spanning 598 to 779 is the Lon proteolytic domain; sequence EPQVGVATGM…DQVLDLALVG (182 aa). Catalysis depends on residues Ser-685 and Lys-728.

It belongs to the peptidase S16 family. In terms of assembly, homohexamer. Organized in a ring with a central cavity.

The protein resides in the cytoplasm. It carries out the reaction Hydrolysis of proteins in presence of ATP.. ATP-dependent serine protease that mediates the selective degradation of mutant and abnormal proteins as well as certain short-lived regulatory proteins. Required for cellular homeostasis and for survival from DNA damage and developmental changes induced by stress. Degrades polypeptides processively to yield small peptide fragments that are 5 to 10 amino acids long. Binds to DNA in a double-stranded, site-specific manner. In Thermus thermophilus (strain ATCC BAA-163 / DSM 7039 / HB27), this protein is Lon protease 2.